The following is a 61-amino-acid chain: uncharacterized protein (61 aa).

The stretch at Tyr-10 to Glu-61 forms a coiled coil.

This is an uncharacterized protein from Acidianus bottle-shaped virus (isolate Italy/Pozzuoli) (ABV).